We begin with the raw amino-acid sequence, 699 residues long: D-(-)-3-hydroxybutyrate oligomer hydrolase (699 aa).

A signal peptide spans 1 to 33 (MTAIRGGSRRAPGLALALLGGVLLGACHGDENA). S311 serves as the catalytic Charge relay system.

Belongs to the D-(-)-3-hydroxybutyrate oligomer hydrolase family.

Its subcellular location is the secreted. The enzyme catalyses (3R)-hydroxybutanoate dimer + H2O = 2 (R)-3-hydroxybutanoate + H(+). It functions in the pathway lipid metabolism; butanoate metabolism. In terms of biological role, participates in the degradation of poly-3-hydroxybutyrate (PHB). It works downstream of poly(3-hydroxybutyrate) depolymerase, hydrolyzing D(-)-3-hydroxybutyrate oligomers of various length (3HB-oligomers) into 3HB-monomers. The polypeptide is D-(-)-3-hydroxybutyrate oligomer hydrolase (Burkholderia mallei (strain NCTC 10247)).